The primary structure comprises 515 residues: RNA-splicing ligase RtcB homolog (515 aa).

Asp121, Cys124, His229, His269, and His363 together coordinate Mn(2+). 228 to 232 (NHYGE) lines the GMP pocket. Residues 363–364 (HN), 412–415 (GGTM), Ser419, 438–441 (HGSG), and Lys514 each bind GMP. The GMP-histidine intermediate role is filled by His438.

It belongs to the RtcB family. Catalytic component of the tRNA-splicing ligase complex. Mn(2+) is required as a cofactor.

It carries out the reaction a 3'-end 3'-phospho-ribonucleotide-RNA + a 5'-end dephospho-ribonucleoside-RNA + GTP = a ribonucleotidyl-ribonucleotide-RNA + GMP + diphosphate. It catalyses the reaction a 3'-end 2',3'-cyclophospho-ribonucleotide-RNA + a 5'-end dephospho-ribonucleoside-RNA + GTP + H2O = a ribonucleotidyl-ribonucleotide-RNA + GMP + diphosphate + H(+). Functionally, catalytic subunit of the tRNA-splicing ligase complex that acts by directly joining spliced tRNA halves to mature-sized tRNAs by incorporating the precursor-derived splice junction phosphate into the mature tRNA as a canonical 3',5'-phosphodiester. May act as an RNA ligase with broad substrate specificity, and may function toward other RNAs. The polypeptide is RNA-splicing ligase RtcB homolog (Theileria annulata).